A 317-amino-acid polypeptide reads, in one-letter code: OVARIAN TUMOR DOMAIN-containing deubiquitinating enzyme 4 (317 aa).

One can recognise an OTU domain in the interval 168 to 306 (YSIIGIPGDG…FGHYDALLLH (139 aa)). D176 is a catalytic residue. The active-site Nucleophile is C179. H299 is an active-site residue.

It belongs to the peptidase C65 family.

Its subcellular location is the cytoplasm. It carries out the reaction Thiol-dependent hydrolysis of ester, thioester, amide, peptide and isopeptide bonds formed by the C-terminal Gly of ubiquitin (a 76-residue protein attached to proteins as an intracellular targeting signal).. Functionally, hydrolase that can remove conjugated ubiquitin from proteins in vitro and may therefore play an important regulatory role at the level of protein turnover by preventing degradation. Cysteine protease with a preference for 'Lys-63' over 'Lys-48'-linked over 'Met-1' ubiquitin (UB) tetramers (e.g. Ub3 and Ub4) as substrates. Also cleaves RUB-GST fusion. This Arabidopsis thaliana (Mouse-ear cress) protein is OVARIAN TUMOR DOMAIN-containing deubiquitinating enzyme 4.